The chain runs to 194 residues: 7-methyl-GTP pyrophosphatase (194 aa).

Asp69 functions as the Proton acceptor in the catalytic mechanism.

The protein belongs to the Maf family. YceF subfamily. A divalent metal cation is required as a cofactor.

The protein localises to the cytoplasm. It carries out the reaction N(7)-methyl-GTP + H2O = N(7)-methyl-GMP + diphosphate + H(+). Its function is as follows. Nucleoside triphosphate pyrophosphatase that hydrolyzes 7-methyl-GTP (m(7)GTP). May have a dual role in cell division arrest and in preventing the incorporation of modified nucleotides into cellular nucleic acids. The sequence is that of 7-methyl-GTP pyrophosphatase (yceF1) from Salmonella paratyphi A (strain ATCC 9150 / SARB42).